The primary structure comprises 225 residues: Holliday junction branch migration complex subunit RuvA (225 aa).

The domain I stretch occupies residues 1–71 (MISWINGDLV…EDSDLLFGFT (71 aa)). A domain II region spans residues 72–150 (SNEQKNFFIE…SEILSEEEKS (79 aa)). The segment at 151–161 (KGELEIKDPEI) is flexible linker. The interval 161-225 (INKMIEDLQL…LDEDSSNIAR (65 aa)) is domain III.

The protein belongs to the RuvA family. Homotetramer. Forms an RuvA(8)-RuvB(12)-Holliday junction (HJ) complex. HJ DNA is sandwiched between 2 RuvA tetramers; dsDNA enters through RuvA and exits via RuvB. An RuvB hexamer assembles on each DNA strand where it exits the tetramer. Each RuvB hexamer is contacted by two RuvA subunits (via domain III) on 2 adjacent RuvB subunits; this complex drives branch migration. In the full resolvosome a probable DNA-RuvA(4)-RuvB(12)-RuvC(2) complex forms which resolves the HJ.

The protein localises to the cytoplasm. Functionally, the RuvA-RuvB-RuvC complex processes Holliday junction (HJ) DNA during genetic recombination and DNA repair, while the RuvA-RuvB complex plays an important role in the rescue of blocked DNA replication forks via replication fork reversal (RFR). RuvA specifically binds to HJ cruciform DNA, conferring on it an open structure. The RuvB hexamer acts as an ATP-dependent pump, pulling dsDNA into and through the RuvAB complex. HJ branch migration allows RuvC to scan DNA until it finds its consensus sequence, where it cleaves and resolves the cruciform DNA. This chain is Holliday junction branch migration complex subunit RuvA, found in Prochlorococcus marinus (strain MIT 9301).